The following is a 146-amino-acid chain: Large ribosomal subunit protein uL15 (146 aa).

Basic and acidic residues predominate over residues 1–10; it reads MTIKLHDLKP. Residues 1 to 52 are disordered; that stretch reads MTIKLHDLKPARGSKTPRTRVGRGEGSKGKTAGRGTKGTKARKNVPVTFEGG.

Belongs to the universal ribosomal protein uL15 family. In terms of assembly, part of the 50S ribosomal subunit.

In terms of biological role, binds to the 23S rRNA. In Mycolicibacterium paratuberculosis (strain ATCC BAA-968 / K-10) (Mycobacterium paratuberculosis), this protein is Large ribosomal subunit protein uL15.